The sequence spans 353 residues: uncharacterized protein (353 aa).

The first 23 residues, Met-1 to Ala-23, serve as a signal peptide directing secretion.

This sequence to E.coli YqiI.

Its function is as follows. May be involved in a fimbrial system chaperoned by YbgP and exported by YbgQ. This is an uncharacterized protein from Escherichia coli (strain K12).